We begin with the raw amino-acid sequence, 163 residues long: Leptin (163 aa).

An N-terminal signal peptide occupies residues 1–18 (MCWRPLCRLWSYLVYVQA). A disulfide bridge links Cys113 with Cys163.

The protein belongs to the leptin family. Not exclusively localized in adipose tissue but is also expressed in liver.

The protein localises to the secreted. Functionally, key player in the regulation of energy balance and body weight control. Once released into the circulation, has central and peripheral effects by binding LEPR, found in many tissues, which results in the activation of several major signaling pathways. The chain is Leptin (LEP) from Gallus gallus (Chicken).